The primary structure comprises 186 residues: Elongation factor P (186 aa).

It belongs to the elongation factor P family.

The protein resides in the cytoplasm. It functions in the pathway protein biosynthesis; polypeptide chain elongation. Involved in peptide bond synthesis. Stimulates efficient translation and peptide-bond synthesis on native or reconstituted 70S ribosomes in vitro. Probably functions indirectly by altering the affinity of the ribosome for aminoacyl-tRNA, thus increasing their reactivity as acceptors for peptidyl transferase. The polypeptide is Elongation factor P (Streptococcus pneumoniae (strain Hungary19A-6)).